We begin with the raw amino-acid sequence, 88 residues long: UPF0250 protein IL0958 (88 aa).

Belongs to the UPF0250 family.

This chain is UPF0250 protein IL0958, found in Idiomarina loihiensis (strain ATCC BAA-735 / DSM 15497 / L2-TR).